Here is a 165-residue protein sequence, read N- to C-terminus: Crossover junction endodeoxyribonuclease RuvC (165 aa).

Residues Asp-7, Glu-67, and Asp-140 contribute to the active site. Asp-7, Glu-67, and Asp-140 together coordinate Mg(2+).

It belongs to the RuvC family. As to quaternary structure, homodimer which binds Holliday junction (HJ) DNA. The HJ becomes 2-fold symmetrical on binding to RuvC with unstacked arms; it has a different conformation from HJ DNA in complex with RuvA. In the full resolvosome a probable DNA-RuvA(4)-RuvB(12)-RuvC(2) complex forms which resolves the HJ. It depends on Mg(2+) as a cofactor.

It localises to the cytoplasm. The enzyme catalyses Endonucleolytic cleavage at a junction such as a reciprocal single-stranded crossover between two homologous DNA duplexes (Holliday junction).. The RuvA-RuvB-RuvC complex processes Holliday junction (HJ) DNA during genetic recombination and DNA repair. Endonuclease that resolves HJ intermediates. Cleaves cruciform DNA by making single-stranded nicks across the HJ at symmetrical positions within the homologous arms, yielding a 5'-phosphate and a 3'-hydroxyl group; requires a central core of homology in the junction. The consensus cleavage sequence is 5'-(A/T)TT(C/G)-3'. Cleavage occurs on the 3'-side of the TT dinucleotide at the point of strand exchange. HJ branch migration catalyzed by RuvA-RuvB allows RuvC to scan DNA until it finds its consensus sequence, where it cleaves and resolves the cruciform DNA. The sequence is that of Crossover junction endodeoxyribonuclease RuvC from Thermotoga petrophila (strain ATCC BAA-488 / DSM 13995 / JCM 10881 / RKU-1).